The sequence spans 296 residues: 33 kDa chaperonin (296 aa).

Disulfide bonds link Cys-238–Cys-240 and Cys-271–Cys-274.

Belongs to the HSP33 family. Post-translationally, under oxidizing conditions two disulfide bonds are formed involving the reactive cysteines. Under reducing conditions zinc is bound to the reactive cysteines and the protein is inactive.

The protein localises to the cytoplasm. Redox regulated molecular chaperone. Protects both thermally unfolding and oxidatively damaged proteins from irreversible aggregation. Plays an important role in the bacterial defense system toward oxidative stress. The chain is 33 kDa chaperonin from Clostridium botulinum (strain Okra / Type B1).